Reading from the N-terminus, the 205-residue chain is Small ribosomal subunit protein uS4 (205 aa).

Positions Asn-18–Gly-49 are disordered. One can recognise an S4 RNA-binding domain in the interval Arg-94 to Asn-157.

It belongs to the universal ribosomal protein uS4 family. Part of the 30S ribosomal subunit. Contacts protein S5. The interaction surface between S4 and S5 is involved in control of translational fidelity.

Functionally, one of the primary rRNA binding proteins, it binds directly to 16S rRNA where it nucleates assembly of the body of the 30S subunit. In terms of biological role, with S5 and S12 plays an important role in translational accuracy. This Nitrobacter winogradskyi (strain ATCC 25391 / DSM 10237 / CIP 104748 / NCIMB 11846 / Nb-255) protein is Small ribosomal subunit protein uS4.